Consider the following 110-residue polypeptide: uncharacterized protein (110 aa).

The interval Ser-86–Phe-110 is disordered. The segment covering Lys-95–Pro-104 has biased composition (basic residues).

This is an uncharacterized protein from Arabidopsis thaliana (Mouse-ear cress).